The primary structure comprises 117 residues: Ig heavy chain V region MOPC 47A (117 aa).

In terms of domain architecture, Ig-like spans 1–113 (EVKLVESGGG…FAYWGZGTLV (113 aa)).

The sequence is that of Ig heavy chain V region MOPC 47A from Mus musculus (Mouse).